Consider the following 336-residue polypeptide: Delta(1)-pyrroline-2-carboxylate reductase (336 aa).

Catalysis depends on serine 47, which acts as the Charge relay system. The active-site Proton donor is the histidine 48. Arginine 52 contributes to the substrate binding site. Residue 120–124 (HFSAL) coordinates NADP(+). Residue threonine 160 participates in substrate binding. 178-180 (DFA) is an NADP(+) binding site. 186–187 (RG) is a substrate binding site. Aspartate 188 serves as the catalytic Charge relay system. NADP(+) is bound by residues 229–230 (HK) and 304–310 (RLPSQRR).

Belongs to the LDH2/MDH2 oxidoreductase family. Homodimer.

The catalysed reaction is L-proline + NAD(+) = 1-pyrroline-2-carboxylate + NADH + H(+). The enzyme catalyses L-proline + NADP(+) = 1-pyrroline-2-carboxylate + NADPH + H(+). In terms of biological role, catalyzes the reduction of Delta(1)-pyrroline-2-carboxylate (Pyr2C) to L-proline, using NADPH as the electron donor. May be involved in a degradation pathway that converts trans-3-hydroxy-L-proline (t3LHyp) to L-proline. The protein is Delta(1)-pyrroline-2-carboxylate reductase of Pseudomonas fluorescens (strain ATCC BAA-477 / NRRL B-23932 / Pf-5).